A 336-amino-acid polypeptide reads, in one-letter code: Histidinol-phosphate aminotransferase (336 aa).

N6-(pyridoxal phosphate)lysine is present on lysine 204.

It belongs to the class-II pyridoxal-phosphate-dependent aminotransferase family. Histidinol-phosphate aminotransferase subfamily. Pyridoxal 5'-phosphate serves as cofactor.

The enzyme catalyses L-histidinol phosphate + 2-oxoglutarate = 3-(imidazol-4-yl)-2-oxopropyl phosphate + L-glutamate. It functions in the pathway amino-acid biosynthesis; L-histidine biosynthesis; L-histidine from 5-phospho-alpha-D-ribose 1-diphosphate: step 7/9. This Thermococcus kodakarensis (strain ATCC BAA-918 / JCM 12380 / KOD1) (Pyrococcus kodakaraensis (strain KOD1)) protein is Histidinol-phosphate aminotransferase.